The chain runs to 314 residues: Glycerate dehydrogenase (314 aa).

Residues Thr-74, 157–158 (AL), 228–230 (TAR), and Asp-254 each bind NAD(+). Arg-230 is a catalytic residue. Glu-259 is a catalytic residue. His-280 acts as the Proton donor in catalysis. An NAD(+)-binding site is contributed by 280–283 (HVAW).

This sequence belongs to the D-isomer specific 2-hydroxyacid dehydrogenase family. As to quaternary structure, homodimer.

Its subcellular location is the cytoplasm. The catalysed reaction is (R)-glycerate + NAD(+) = 3-hydroxypyruvate + NADH + H(+). Its pathway is one-carbon metabolism; formaldehyde assimilation via serine pathway. Functionally, plays a central role in assimilation of carbon. It converts hydroxypyruvate to glycerate as a key step in the serine cycle, and may also play an important role in C2 reactions, by interconverting glyoxylate and glycolate. This is Glycerate dehydrogenase (hprA) from Methylorubrum extorquens (strain ATCC 14718 / DSM 1338 / JCM 2805 / NCIMB 9133 / AM1) (Methylobacterium extorquens).